The primary structure comprises 182 residues: Large ribosomal subunit protein uL10 (182 aa).

Belongs to the universal ribosomal protein uL10 family. Part of the ribosomal stalk of the 50S ribosomal subunit. The N-terminus interacts with L11 and the large rRNA to form the base of the stalk. The C-terminus forms an elongated spine to which L12 dimers bind in a sequential fashion forming a multimeric L10(L12)X complex.

Forms part of the ribosomal stalk, playing a central role in the interaction of the ribosome with GTP-bound translation factors. The protein is Large ribosomal subunit protein uL10 of Gluconacetobacter diazotrophicus (strain ATCC 49037 / DSM 5601 / CCUG 37298 / CIP 103539 / LMG 7603 / PAl5).